Reading from the N-terminus, the 555-residue chain is MPSWIGAVILPLLGLLLSLPAGADVKARSCGEVRQAYGAKGFSLADIPYQEIAGEHLRICPQEYTCCTTEMEDKLSQQSKLEFENLVEETSHFVRTTFVSRHKKFDEFFRELLENAEKSLNDMFVRTYGMLYMQNSEVFQDLFTELKRYYTGGNVNLEEMLNDFWARLLERMFQLINPQYHFSEDYLECVSKYTDQLKPFGDVPRKLKIQVTRAFIAARTFVQGLTVGREVANRVSKVSPTPGCIRALMKMLYCPYCRGLPTVRPCNNYCLNVMKGCLANQADLDTEWNLFIDAMLLVAERLEGPFNIESVMDPIDVKISEAIMNMQENSMQVSAKVFQGCGQPKPAPALRSARSAPENFNTRFRPYNPEERPTTAAGTSLDRLVTDIKEKLKLSKKVWSALPYTICKDESVTAGTSNEEECWNGHSKARYLPEIMNDGLTNQINNPEVDVDITRPDTFIRQQIMALRVMTNKLKNAYNGNDVNFQDTSDESSGSGSGSGCMDDVCPTEFEFVTTEAPAVDPDRREVDSSAAQRGHSLLSWSLTCIVLALQRLCR.

Residues 1–23 (MPSWIGAVILPLLGLLLSLPAGA) form the signal peptide. Low complexity predominate over residues 348–357 (PALRSARSAP). Disordered stretches follow at residues 348 to 376 (PALRSARSAPENFNTRFRPYNPEERPTTA) and 480 to 501 (GNDVNFQDTSDESSGSGSGSGC). A lipid anchor (GPI-anchor amidated serine) is attached at S529. Positions 530-555 (SAAQRGHSLLSWSLTCIVLALQRLCR) are cleaved as a propeptide — removed in mature form.

It belongs to the glypican family. Widely expressed. High expression in fetal kidney and lung and lower expressions in fetal liver and brain. In adult tissues, very abundant in ovary, high levels also observed in liver, kidney, small intestine and colon. Not detected in peripheral blood leukocytes. Detected in breast cancer cells (at protein level).

Its subcellular location is the cell membrane. The protein localises to the secreted. The protein resides in the extracellular space. Cell surface proteoglycan that bears heparan sulfate. Putative cell surface coreceptor for growth factors, extracellular matrix proteins, proteases and anti-proteases. Enhances migration and invasion of cancer cells through WNT5A signaling. The protein is Glypican-6 (GPC6) of Homo sapiens (Human).